The following is a 323-amino-acid chain: DNA repair and recombination protein RadA (323 aa).

114–121 (GEFGSGKT) is a binding site for ATP.

The protein belongs to the eukaryotic RecA-like protein family.

In terms of biological role, involved in DNA repair and in homologous recombination. Binds and assemble on single-stranded DNA to form a nucleoprotein filament. Hydrolyzes ATP in a ssDNA-dependent manner and promotes DNA strand exchange between homologous DNA molecules. This is DNA repair and recombination protein RadA from Picrophilus torridus (strain ATCC 700027 / DSM 9790 / JCM 10055 / NBRC 100828 / KAW 2/3).